Here is a 74-residue protein sequence, read N- to C-terminus: SPbeta prophage-derived uncharacterized HTH-type transcriptional regulator YopS (74 aa).

The region spanning 11–66 (IPELCRKKDITINELSEITGIKKQQLSDYNRLVKVDMSIRTAKRIAAALDCNVEDL) is the HTH cro/C1-type domain. Residues 22 to 41 (INELSEITGIKKQQLSDYNR) constitute a DNA-binding region (H-T-H motif).

The sequence is that of SPbeta prophage-derived uncharacterized HTH-type transcriptional regulator YopS (yopS) from Bacillus subtilis (strain 168).